The sequence spans 267 residues: Distal basal body ring component protein (267 aa).

An N-terminal signal peptide occupies residues methionine 1–leucine 29.

In terms of assembly, flaD is a subunit of the flagellar transenvelope basal body.

The protein resides in the periplasm. Its subcellular location is the bacterial flagellum basal body. Its function is as follows. FlaD might be the structural protein of the distal basal body ring P, or it is necessary for the assembly of the P ring. This Caulobacter vibrioides (strain ATCC 19089 / CIP 103742 / CB 15) (Caulobacter crescentus) protein is Distal basal body ring component protein (flaD).